Reading from the N-terminus, the 271-residue chain is 3-methyl-2-oxobutanoate hydroxymethyltransferase (271 aa).

2 residues coordinate Mg(2+): Asp51 and Asp90. 3-methyl-2-oxobutanoate-binding positions include 51–52 (DS), Asp90, and Lys118. Glu120 provides a ligand contact to Mg(2+). Glu186 (proton acceptor) is an active-site residue.

Belongs to the PanB family. In terms of assembly, homodecamer; pentamer of dimers. It depends on Mg(2+) as a cofactor.

The protein resides in the cytoplasm. It carries out the reaction 3-methyl-2-oxobutanoate + (6R)-5,10-methylene-5,6,7,8-tetrahydrofolate + H2O = 2-dehydropantoate + (6S)-5,6,7,8-tetrahydrofolate. It participates in cofactor biosynthesis; (R)-pantothenate biosynthesis; (R)-pantoate from 3-methyl-2-oxobutanoate: step 1/2. Functionally, catalyzes the reversible reaction in which hydroxymethyl group from 5,10-methylenetetrahydrofolate is transferred onto alpha-ketoisovalerate to form ketopantoate. This chain is 3-methyl-2-oxobutanoate hydroxymethyltransferase, found in Xanthomonas euvesicatoria pv. vesicatoria (strain 85-10) (Xanthomonas campestris pv. vesicatoria).